A 90-amino-acid polypeptide reads, in one-letter code: DNA-binding protein HU (90 aa).

A Phosphothreonine modification is found at T4. The segment at 56–90 (AARKGRNPQTGEEMEIPASKVPAFKPGKALKDAVK) is disordered.

It belongs to the bacterial histone-like protein family. In terms of assembly, homodimer.

In terms of biological role, histone-like DNA-binding protein which is capable of wrapping DNA to stabilize it, and thus to prevent its denaturation under extreme environmental conditions. The chain is DNA-binding protein HU (hup) from Geobacillus stearothermophilus (Bacillus stearothermophilus).